The sequence spans 557 residues: ABC1 family protein MCP2 homolog (557 aa).

The N-terminal 33 residues, 1 to 33 (MFSRFSWPRITRCFRSYPKKKSSCISFTHHARE), are a transit peptide targeting the mitochondrion. Topologically, residues 34 to 39 (HTNFKK) are mitochondrial matrix. A helical membrane pass occupies residues 40-56 (PAVVGASITLMASVALV). Residues 57–557 (DFDPVKHAGV…NYFYYKHMYL (501 aa)) are Mitochondrial intermembrane-facing.

Belongs to the protein kinase superfamily. ADCK protein kinase family.

The protein localises to the mitochondrion inner membrane. In terms of biological role, involved in mitochondrial lipid homeostasis. The polypeptide is ABC1 family protein MCP2 homolog (Schizosaccharomyces pombe (strain 972 / ATCC 24843) (Fission yeast)).